Consider the following 169-residue polypeptide: Peptide deformylase 1 (169 aa).

C93 and H135 together coordinate Fe cation. E136 is a catalytic residue. H139 is a Fe cation binding site.

This sequence belongs to the polypeptide deformylase family. Fe(2+) serves as cofactor.

It catalyses the reaction N-terminal N-formyl-L-methionyl-[peptide] + H2O = N-terminal L-methionyl-[peptide] + formate. In terms of biological role, removes the formyl group from the N-terminal Met of newly synthesized proteins. Requires at least a dipeptide for an efficient rate of reaction. N-terminal L-methionine is a prerequisite for activity but the enzyme has broad specificity at other positions. The sequence is that of Peptide deformylase 1 from Corynebacterium glutamicum (strain ATCC 13032 / DSM 20300 / JCM 1318 / BCRC 11384 / CCUG 27702 / LMG 3730 / NBRC 12168 / NCIMB 10025 / NRRL B-2784 / 534).